We begin with the raw amino-acid sequence, 669 residues long: GTP-binding protein 1 (669 aa).

The disordered stretch occupies residues 1–32 (MATERSRSAMDSPVPASMFAPEPSSPGAARAA). Phosphoserine occurs at positions 6, 8, 12, 24, 25, 44, 47, and 69. A tr-type G domain is found at 158–389 (FLEVRVAVVG…LNLLSPRTSY (232 aa)). The tract at residues 167 to 174 (GNVDAGKS) is G1. GTP is bound at residue 167 to 174 (GNVDAGKS). Residues 206-210 (GRTSS) are G2. Residues 252–255 (DLAG) are G3. Residues 252–256 (DLAGH) and 308–311 (TKID) contribute to the GTP site. The segment at 308–311 (TKID) is G4. A G5 region spans residues 366–368 (SNV). The segment covering 573–595 (LLQTTNNSPMNSKPQQIKMQSTK) has biased composition (polar residues). Residues 573-669 (LLQTTNNSPM…GACVTPASGC (97 aa)) are disordered. At Ser-580 the chain carries Phosphoserine. The span at 646–657 (GRRRGGQRHKVK) shows a compositional bias: basic residues.

It belongs to the TRAFAC class translation factor GTPase superfamily. Classic translation factor GTPase family. GTPBP1 subfamily. As to quaternary structure, interacts with EXOSC2/RRP4, EXOSC3/RRP40, EXOSC5/RRP46, HNRNPD, HNRNPR and SYNCRIP. Identified in a complex with AANAT mRNA, but does not bind mRNA by itself.

It is found in the cytoplasm. Functionally, promotes degradation of target mRNA species. Plays a role in the regulation of circadian mRNA stability. Binds GTP and has GTPase activity. This chain is GTP-binding protein 1 (GTPBP1), found in Homo sapiens (Human).